The sequence spans 849 residues: Neprilysin-1 (849 aa).

At 1–113 (MSQQHEATAA…LKESQQRRRL (113 aa)) the chain is on the cytoplasmic side. Low complexity predominate over residues 41 to 61 (QQQVQHQAPHQMQQQQQQQQQ). Residues 41–63 (QQQVQHQAPHQMQQQQQQQQQNK) form a disordered region. A helical; Signal-anchor for type II membrane protein transmembrane segment spans residues 114–134 (LVLAIAFTVLGAAIGALAIYF). At 135–849 (ASVHQRCHLY…MNPAEKCSVW (715 aa)) the chain is on the extracellular side. Residues 146-155 (LEPDNDDRPN) are compositionally biased toward basic and acidic residues. The segment at 146-167 (LEPDNDDRPNGRWNQDSGSAHE) is disordered. A Peptidase M13 domain is found at 172 to 849 (ICMTQECVRT…MNPAEKCSVW (678 aa)). Cystine bridges form between C173-C178, C196-C834, C204-C794, C260-C512, and C721-C846. Residues N309, N326, N393, N589, and N599 are each glycosylated (N-linked (GlcNAc...) asparagine). Residue H684 coordinates Zn(2+). The active site involves E685. H688 contacts Zn(2+). Residue N709 is glycosylated (N-linked (GlcNAc...) asparagine). E746 contributes to the Zn(2+) binding site. D750 acts as the Proton donor in catalysis. N-linked (GlcNAc...) asparagine glycosylation is present at N778.

Belongs to the peptidase M13 family. Requires Zn(2+) as cofactor. Expressed in the testicular tube, near and in the seminal vesicles. In adults and third-instar larvae, expressed in the midgut and in the mushroom bodies of the brain and neurons in the pars intercerebralis. Also expressed in neurons of the ventral ganglion and imaginal disks (wing and leg) of third-instar larvae. In stage 17 embryos, expressed in the peripheral nervous system, pharynx and midgut.

The protein localises to the cell membrane. The catalysed reaction is Preferential cleavage of polypeptides between hydrophobic residues, particularly with Phe or Tyr at P1'.. Its function is as follows. Metalloendoprotease which functions in fertility and memory formation. Required in the dorsal paired medial neurons and alpha/beta mushroom body neurons for the proper formation of long-term and middle-term memories. Required in males to maximise egg-laying in female mates and is also required in females for their fertility. This is Neprilysin-1 from Drosophila melanogaster (Fruit fly).